The chain runs to 186 residues: Large ribosomal subunit protein uL5 (186 aa).

This sequence belongs to the universal ribosomal protein uL5 family. In terms of assembly, part of the 50S ribosomal subunit; part of the 5S rRNA/L5/L18/L25 subcomplex. Contacts the 5S rRNA and the P site tRNA. Forms a bridge to the 30S subunit in the 70S ribosome.

Functionally, this is one of the proteins that bind and probably mediate the attachment of the 5S RNA into the large ribosomal subunit, where it forms part of the central protuberance. In the 70S ribosome it contacts protein S13 of the 30S subunit (bridge B1b), connecting the 2 subunits; this bridge is implicated in subunit movement. Contacts the P site tRNA; the 5S rRNA and some of its associated proteins might help stabilize positioning of ribosome-bound tRNAs. In Jannaschia sp. (strain CCS1), this protein is Large ribosomal subunit protein uL5.